The chain runs to 358 residues: Alanine racemase (358 aa).

The active-site Proton acceptor; specific for D-alanine is Lys35. Lys35 carries the N6-(pyridoxal phosphate)lysine modification. Arg130 is a substrate binding site. Residue Tyr255 is the Proton acceptor; specific for L-alanine of the active site. Met303 provides a ligand contact to substrate.

The protein belongs to the alanine racemase family. Pyridoxal 5'-phosphate serves as cofactor.

It carries out the reaction L-alanine = D-alanine. The protein operates within amino-acid biosynthesis; D-alanine biosynthesis; D-alanine from L-alanine: step 1/1. Catalyzes the interconversion of L-alanine and D-alanine. May also act on other amino acids. The polypeptide is Alanine racemase (alr) (Shewanella baltica (strain OS223)).